We begin with the raw amino-acid sequence, 696 residues long: Elongation factor G (696 aa).

The tr-type G domain occupies 8-282; sequence DRTRNIGIMA…AVIDYLPSPL (275 aa). GTP-binding positions include 17–24, 81–85, and 135–138; these read AHIDAGKT, DTPGH, and NKMD.

Belongs to the TRAFAC class translation factor GTPase superfamily. Classic translation factor GTPase family. EF-G/EF-2 subfamily.

The protein localises to the cytoplasm. In terms of biological role, catalyzes the GTP-dependent ribosomal translocation step during translation elongation. During this step, the ribosome changes from the pre-translocational (PRE) to the post-translocational (POST) state as the newly formed A-site-bound peptidyl-tRNA and P-site-bound deacylated tRNA move to the P and E sites, respectively. Catalyzes the coordinated movement of the two tRNA molecules, the mRNA and conformational changes in the ribosome. In Staphylococcus saprophyticus subsp. saprophyticus (strain ATCC 15305 / DSM 20229 / NCIMB 8711 / NCTC 7292 / S-41), this protein is Elongation factor G.